The chain runs to 390 residues: Chorismate synthase 1 (390 aa).

NADP(+) is bound by residues Arg39 and Arg45. FMN contacts are provided by residues 132–134, 253–254, Gly298, 313–317, and Arg339; these read RSS, NA, and KPIPT.

It belongs to the chorismate synthase family. In terms of assembly, homotetramer. The cofactor is FMNH2.

The catalysed reaction is 5-O-(1-carboxyvinyl)-3-phosphoshikimate = chorismate + phosphate. Its pathway is metabolic intermediate biosynthesis; chorismate biosynthesis; chorismate from D-erythrose 4-phosphate and phosphoenolpyruvate: step 7/7. In terms of biological role, catalyzes the anti-1,4-elimination of the C-3 phosphate and the C-6 proR hydrogen from 5-enolpyruvylshikimate-3-phosphate (EPSP) to yield chorismate, which is the branch point compound that serves as the starting substrate for the three terminal pathways of aromatic amino acid biosynthesis. This reaction introduces a second double bond into the aromatic ring system. The polypeptide is Chorismate synthase 1 (Bacillus anthracis).